Reading from the N-terminus, the 363-residue chain is GTPase Obg (363 aa).

The region spanning 1–159 (MKFIDEAKIY…LELRLELRVL (159 aa)) is the Obg domain. One can recognise an OBG-type G domain in the interval 160–338 (ADVGLLGLPN…LIYAISEALE (179 aa)). GTP contacts are provided by residues 166 to 173 (GLPNAGKS), 191 to 195 (FTTLH), 213 to 216 (DVPG), 284 to 287 (NKLD), and 319 to 321 (AAI). Mg(2+)-binding residues include serine 173 and threonine 193. Positions 342-363 (RPEIGDLDDNDEDSDEIIRDTE) are disordered. The span at 346-356 (GDLDDNDEDSD) shows a compositional bias: acidic residues.

This sequence belongs to the TRAFAC class OBG-HflX-like GTPase superfamily. OBG GTPase family. As to quaternary structure, monomer. It depends on Mg(2+) as a cofactor.

Its subcellular location is the cytoplasm. In terms of biological role, an essential GTPase which binds GTP, GDP and possibly (p)ppGpp with moderate affinity, with high nucleotide exchange rates and a fairly low GTP hydrolysis rate. Plays a role in control of the cell cycle, stress response, ribosome biogenesis and in those bacteria that undergo differentiation, in morphogenesis control. This is GTPase Obg from Dechloromonas aromatica (strain RCB).